Here is a 35-residue protein sequence, read N- to C-terminus: Photosystem II reaction center protein M (35 aa).

A helical transmembrane segment spans residues 5-25; it reads IFGLTATALFIIIPTSFLLIL.

The protein belongs to the PsbM family. PSII is composed of 1 copy each of membrane proteins PsbA, PsbB, PsbC, PsbD, PsbE, PsbF, PsbH, PsbI, PsbJ, PsbK, PsbL, PsbM, PsbT, PsbX, PsbY, PsbZ, Psb30/Ycf12, at least 3 peripheral proteins of the oxygen-evolving complex and a large number of cofactors. It forms dimeric complexes.

Its subcellular location is the plastid. It is found in the chloroplast thylakoid membrane. In terms of biological role, one of the components of the core complex of photosystem II (PSII). PSII is a light-driven water:plastoquinone oxidoreductase that uses light energy to abstract electrons from H(2)O, generating O(2) and a proton gradient subsequently used for ATP formation. It consists of a core antenna complex that captures photons, and an electron transfer chain that converts photonic excitation into a charge separation. This subunit is found at the monomer-monomer interface. This is Photosystem II reaction center protein M from Tetradesmus obliquus (Green alga).